A 702-amino-acid polypeptide reads, in one-letter code: MAQKHPGERGLYGAHHSGGASLRTLGPSVDPEIPSFSGLRDSAGTAPNGTRCLTEHSGPKHTQHPNPAHWLDPSHGPPGGPGPPRDAEDPDQSETSSEEESGVDQELSKENETGNQKDGNSFLSIPSACNCQGTPGIPEGPYSEGGNGSSSNFCHHCTSPALGEDELEEEYDDEESLKFPSDFSRVSSGKKPPSRRQRHRFPTKEDTREGGRRDPRSPGRHRLGRKRSQADKRKGLGLWGAEELCQLGQAGFWWLIELLVLVGEYVETCGHLIYACRQLKSSDLDLFRVWMGVWTGRLGGWAQVMFQFLSQGFYCGVGLFTRFLKLLGALLLLALALFLGFLQLGWRFLVGLGDRLGWRDKATWLFSWLDSPALQRCLTLLRDSRPWQRLVRIVQWGWLELPWVKQNINRQGNAPVASGRYCQPEEEVARLLTMAGVPEDELNPFHVLGVEATASDVELKKAYRQLAVMVHPDKNHHPRAEEAFKVLRAAWDIVSNAEKRKEYEMKRMAENELSRSVNEFLSKLQDDLKEAMNTMMCSRCQGKHRRFEMDREPKSARYCAECNRLHPAEEGDFWAESSMLGLKITYFALMDGKVYDITEWAGCQRVGISPDTHRVPYHISFGSRIPGTRGRQRATPDAPPADLQDFLSRIFQVPPGQMPNGNFFAAPQPAPGAAAASKPNSTVPKGEAKPKRRKKVRRPFQR.

Disordered regions lie at residues 1-148 (MAQK…GGNG) and 165-229 (DELE…KRSQ). Residues 75-84 (HGPPGGPGPP) show a composition bias toward pro residues. Over residues 88–103 (EDPDQSETSSEEESGV) the composition is skewed to acidic residues. A compositionally biased stretch (polar residues) spans 113–133 (TGNQKDGNSFLSIPSACNCQG). Residues 165-175 (DELEEEYDDEE) show a composition bias toward acidic residues. Basic residues predominate over residues 192 to 201 (PPSRRQRHRF). Basic and acidic residues predominate over residues 202-217 (PTKEDTREGGRRDPRS). Residues 218–227 (PGRHRLGRKR) show a composition bias toward basic residues. The next 3 membrane-spanning stretches (helical) occupy residues 250–270 (AGFW…ETCG), 300–320 (GWAQ…VGLF), and 326–346 (LLGA…QLGW). The J domain occupies 443-507 (NPFHVLGVEA…EKRKEYEMKR (65 aa)). The disordered stretch occupies residues 658–702 (MPNGNFFAAPQPAPGAAAASKPNSTVPKGEAKPKRRKKVRRPFQR). Low complexity predominate over residues 659-676 (PNGNFFAAPQPAPGAAAA). The segment covering 690–702 (PKRRKKVRRPFQR) has biased composition (basic residues).

In terms of assembly, interacts with the FxxxFxxxF motif of DRD1 via its C-terminal domain. In terms of tissue distribution, highly expressed in pancreas and selectively expressed in brain, lung, liver, skeletal muscle and kidney.

It localises to the endoplasmic reticulum membrane. Functionally, regulates the export of target proteins, such as DRD1, from the endoplasmic reticulum to the cell surface. In Homo sapiens (Human), this protein is DnaJ homolog subfamily C member 14 (DNAJC14).